Reading from the N-terminus, the 443-residue chain is MYQRSLFRGVAQGLKRSSVRFQSTSSGSSNGNFFLRHWKLLSVIGSFTAGVAIYDMSDVRSFIHGRIEMPLFHAFTTPEFSHRVAILAASWGITPKDRVADDPSLAVEVWGKKFCNPIGLAAGFDKQADAISGLLNFGFSYLEIGSVTPKPQPGNPKPRYFRLKPDLSVINRYGFNSIGHDAILAKIQKRVRKYIAKTSPQLLKQFDANPASCTDPAVLGVPRSLIPNKFLGINLGKNKNGNEIEDYVEGVRTFGNFADILVINVSSPNTPGLRNLQKKSALSTLLTAVVSERNKLNSPHPPVLVKIAPDLNEEELTDIADVLKKCKIDGVIVGNTTVQRPKTLKSTSHVEETGGLSGPPLKPIALNTLRTLRKHLSSDIPIIGCGGISSGKDAIEYARAGATMVQVYTALGYDGPVIAHKIKQEILAELKGKRWVDIIGKEE.

Residues 1 to 21 constitute a mitochondrion transit peptide; sequence MYQRSLFRGVAQGLKRSSVRF. The chain crosses the membrane as a helical span at residues 38-54; it reads WKLLSVIGSFTAGVAIY. Residues 122-126 and Ser146 contribute to the FMN site; that span reads AGFDK. Lys126 serves as a coordination point for substrate. Phosphoserine is present on Ser168. 171-175 provides a ligand contact to substrate; sequence NRYGF. FMN is bound by residues Asn234 and Asn264. Residue 264–269 coordinates substrate; it reads NVSSPN. The active-site Nucleophile is the Ser267. Lys306 lines the FMN pocket. 335-336 lines the substrate pocket; the sequence is NT. FMN is bound by residues Gly358, Gly387, and 408–409; that span reads YT.

This sequence belongs to the dihydroorotate dehydrogenase family. Type 2 subfamily. Requires FMN as cofactor.

It is found in the mitochondrion inner membrane. The enzyme catalyses (S)-dihydroorotate + a quinone = orotate + a quinol. Its pathway is pyrimidine metabolism; UMP biosynthesis via de novo pathway; orotate from (S)-dihydroorotate (quinone route): step 1/1. In the de novo pyrimidine biosynthesis pathway, catalyzes the stereospecific oxidation of (S)-dihydroorotate to orotate with reduction of flavin and the transfer of electrons to ubiquinone, which is part of the respiratory chain. Does not use fumarate and NAD as electron acceptors. This is Dihydroorotate dehydrogenase (quinone), mitochondrial (ura3) from Schizosaccharomyces pombe (strain 972 / ATCC 24843) (Fission yeast).